Here is a 126-residue protein sequence, read N- to C-terminus: Aspartate 1-decarboxylase (126 aa).

Residue Ser-25 is the Schiff-base intermediate with substrate; via pyruvic acid of the active site. The residue at position 25 (Ser-25) is a Pyruvic acid (Ser). Thr-57 is a substrate binding site. Tyr-58 (proton donor) is an active-site residue. 73-75 (GAA) is a binding site for substrate.

This sequence belongs to the PanD family. As to quaternary structure, heterooctamer of four alpha and four beta subunits. Pyruvate serves as cofactor. In terms of processing, is synthesized initially as an inactive proenzyme, which is activated by self-cleavage at a specific serine bond to produce a beta-subunit with a hydroxyl group at its C-terminus and an alpha-subunit with a pyruvoyl group at its N-terminus.

The protein resides in the cytoplasm. It catalyses the reaction L-aspartate + H(+) = beta-alanine + CO2. Its pathway is cofactor biosynthesis; (R)-pantothenate biosynthesis; beta-alanine from L-aspartate: step 1/1. In terms of biological role, catalyzes the pyruvoyl-dependent decarboxylation of aspartate to produce beta-alanine. The protein is Aspartate 1-decarboxylase of Psychrobacter arcticus (strain DSM 17307 / VKM B-2377 / 273-4).